We begin with the raw amino-acid sequence, 932 residues long: DNA mismatch repair protein MutS (932 aa).

Residue 620–627 (GPNMAGKS) coordinates ATP.

The protein belongs to the DNA mismatch repair MutS family.

Its function is as follows. This protein is involved in the repair of mismatches in DNA. It is possible that it carries out the mismatch recognition step. This protein has a weak ATPase activity. The chain is DNA mismatch repair protein MutS from Lachnoclostridium phytofermentans (strain ATCC 700394 / DSM 18823 / ISDg) (Clostridium phytofermentans).